The following is a 532-amino-acid chain: Cytokinin dehydrogenase 1 (532 aa).

An N-terminal signal peptide occupies residues 1–17 (MAAIYLLIAALIASSHA). N-linked (GlcNAc...) asparagine glycosylation is found at N52 and N63. In terms of domain architecture, FAD-binding PCMH-type spans 65-244 (TAALPAAVLF…TRARVAVEPA (180 aa)). FAD-binding residues include F100, G102, R103, and G104. H105 bears the Pros-8alpha-FAD histidine mark. Positions 106 and 110 each coordinate FAD. N-linked (GlcNAc...) asparagine glycosylation is present at N133. Residues D168, T173, S179, V183, and I234 each coordinate FAD. N321 and N432 each carry an N-linked (GlcNAc...) asparagine glycan. FAD-binding residues include Y490, S525, and Q528.

This sequence belongs to the oxygen-dependent FAD-linked oxidoreductase family. As to quaternary structure, monomer. Requires FAD as cofactor.

It is found in the secreted. Its subcellular location is the extracellular space. The catalysed reaction is N(6)-dimethylallyladenine + A + H2O = 3-methyl-2-butenal + adenine + AH2. Catalyzes the oxidation of cytokinins, a family of N(6)-substituted adenine derivatives that are plant hormones, where the substituent is an isopentenyl group. This Oryza sativa subsp. japonica (Rice) protein is Cytokinin dehydrogenase 1 (CKX1).